Consider the following 347-residue polypeptide: Probable 3-hydroxyisobutyrate dehydrogenase, mitochondrial (347 aa).

A mitochondrion-targeting transit peptide spans 1–34 (MAIRRAQTLLCLSKFKTNFVSGSLHRFSSSSQNS). NAD(+) is bound by residues 38 to 67 (QNVGFIGLGNMGFRMVNNLIRAGYKVTVHD), 101 to 102 (LP), and T134. K219 is a catalytic residue. K294 serves as a coordination point for NAD(+).

This sequence belongs to the HIBADH-related family. 3-hydroxyisobutyrate dehydrogenase subfamily.

Its subcellular location is the mitochondrion. It catalyses the reaction 3-hydroxy-2-methylpropanoate + NAD(+) = 2-methyl-3-oxopropanoate + NADH + H(+). The protein operates within amino-acid degradation; L-valine degradation. This chain is Probable 3-hydroxyisobutyrate dehydrogenase, mitochondrial, found in Arabidopsis thaliana (Mouse-ear cress).